Consider the following 882-residue polypeptide: DNA replication helicase (882 aa).

Positions 1–29 are disordered; that stretch reads MAAAGGERQLDGQKPGPPHLQQPGDRPAV. Residue 97–104 coordinates ATP; it reads GNAGSGKS.

Belongs to the herpesviridae helicase family. As to quaternary structure, associates with the primase and the primase-associated factor to form the helicase-primase complex.

Its subcellular location is the host nucleus. In terms of biological role, component of the helicase/primase complex. Unwinds the DNA at the replication forks and generates single-stranded DNA for both leading and lagging strand synthesis. The primase synthesizes short RNA primers on the lagging strand that the polymerase elongates using dNTPs. Possesses helicase-like motifs and therefore may act as the helicase subunit of the complex. The polypeptide is DNA replication helicase (Homo sapiens (Human)).